The sequence spans 381 residues: Cytochrome b (381 aa).

4 helical membrane passes run 34–54 (FGSL…FLAM), 78–99 (WLIR…YLHI), 114–134 (WNIG…GYVL), and 179–199 (FFAF…LHFL). The heme b site is built by His-84 and His-98. Positions 183 and 197 each coordinate heme b. His-202 contacts a ubiquinone. 4 helical membrane passes run 227 to 247 (YKDI…VLFL), 289 to 309 (LGGV…PFLH), 321 to 341 (LTQL…WIGG), and 348 to 368 (FIFI…IITP).

Belongs to the cytochrome b family. As to quaternary structure, the cytochrome bc1 complex contains 3 respiratory subunits (MT-CYB, CYC1 and UQCRFS1), 2 core proteins (UQCRC1 and UQCRC2) and probably 6 low-molecular weight proteins. It depends on heme b as a cofactor.

It is found in the mitochondrion inner membrane. In terms of biological role, component of the ubiquinol-cytochrome c reductase complex (complex III or cytochrome b-c1 complex) that is part of the mitochondrial respiratory chain. The b-c1 complex mediates electron transfer from ubiquinol to cytochrome c. Contributes to the generation of a proton gradient across the mitochondrial membrane that is then used for ATP synthesis. This Heterodontus francisci (Horn shark) protein is Cytochrome b (mt-cyb).